Consider the following 471-residue polypeptide: Putative multidrug resistance protein MdtD (471 aa).

The Periplasmic segment spans residues 1–11; it reads MTDLPDSTRWQ. A helical transmembrane segment spans residues 12-32; sequence LWIVAFGFFMQSLDTTIVNTA. Residues 33 to 48 lie on the Cytoplasmic side of the membrane; that stretch reads LPSMAQSLGESPLHMH. A helical transmembrane segment spans residues 49–69; the sequence is MVIVSYVLTVAVMLPASGWLA. The Periplasmic segment spans residues 70 to 76; sequence DKVGVRN. Residues 77–97 form a helical membrane-spanning segment; that stretch reads IFFTAIVLFTLGSLFCALSGT. The Cytoplasmic segment spans residues 98–101; it reads LNEL. Residues 102–124 traverse the membrane as a helical segment; that stretch reads LLARALQGVGGAMMVPVGRLTVM. Over 125-137 the chain is Periplasmic; sequence KIVPREQYMAAMT. The helical transmembrane segment at 138–158 threads the bilayer; it reads FVTLPGQVGPLLGPALGGLLV. Residues 159 to 164 are Cytoplasmic-facing; that stretch reads EYASWH. A helical membrane pass occupies residues 165–185; that stretch reads WIFLINIPVGIIGAIATLMLM. The Periplasmic portion of the chain corresponds to 186–196; that stretch reads PNYTMQTRRFD. Residues 197–217 traverse the membrane as a helical segment; sequence LSGFLLLAVGMAVLTLALDGS. The Cytoplasmic segment spans residues 218–224; sequence KGTGFSP. A helical transmembrane segment spans residues 225 to 245; it reads LAIAGLVAVGVVALVLYLLHA. Topologically, residues 246–262 are periplasmic; it reads QNNNRALFSLKLFRTRT. The chain crosses the membrane as a helical span at residues 263–283; that stretch reads FSLGLAGSFAGRIGSGMLPFM. At 284-285 the chain is on the cytoplasmic side; it reads TP. A helical membrane pass occupies residues 286–306; that stretch reads VFLQIGLGFSPFHAGLMMIPM. The Periplasmic segment spans residues 307–341; it reads VLGSMGMKRIVVQVVNRFGYRRVLVATTLGLSLVT. The chain crosses the membrane as a helical span at residues 342–362; sequence LLFMTTALLGWYYVLPFVLFL. Topologically, residues 363–395 are cytoplasmic; it reads QGMVNSTRFSSMNTLTLKDLPDNLASSGNSLLS. Residues 396-416 form a helical membrane-spanning segment; the sequence is MIMQLSMSIGVTIAGLLLGLF. Residues 417-430 are Periplasmic-facing; sequence GSQHVSVDSGTTQT. A helical membrane pass occupies residues 431–451; that stretch reads VFMYTWLSMAFIIALPAFVFA. The Cytoplasmic segment spans residues 452 to 471; sequence RVPSDTHQNVAISRRKRSAQ.

Belongs to the major facilitator superfamily. TCR/Tet family.

The protein localises to the cell inner membrane. The polypeptide is Putative multidrug resistance protein MdtD (Escherichia coli O45:K1 (strain S88 / ExPEC)).